A 1063-amino-acid chain; its full sequence is Endo-1,4-beta-xylanase 2 (1063 aa).

4 consecutive CBM-cenC domains span residues 5–146 (NIVM…GPAP), 183–313 (NIIK…LEGP), 348–482 (NHIF…IEGP), and 517–662 (NIVS…QGPS). The region spanning 711–1006 (SGATVKIRQT…NEAGKRFLEI (296 aa)) is the GH10 domain. Catalysis depends on glutamate 840, which acts as the Proton donor. Residue glutamate 941 is the Nucleophile of the active site.

It belongs to the glycosyl hydrolase 10 (cellulase F) family.

The enzyme catalyses Endohydrolysis of (1-&gt;4)-beta-D-xylosidic linkages in xylans.. Its pathway is glycan degradation; xylan degradation. Binds to and hydrolyzes insoluble and soluble xylan substrates. The polypeptide is Endo-1,4-beta-xylanase 2 (Arabidopsis thaliana (Mouse-ear cress)).